The following is a 372-amino-acid chain: Proline-rich P65 protein homolog (372 aa).

Residues 1–37 (MEKNRSAFQQNQQASNQPFNQDQNQYYQDPNQQQFNQ) are compositionally biased toward low complexity. Residues 1-100 (MEKNRSAFQQ…GFDPNQQYYQ (100 aa)) are disordered. A run of 13 repeats spans residues 29 to 40 (DPNQQQFNQSGF), 41 to 52 (DPNQQQFNQPGF), 53 to 60 (DPNQQYYQ), 61 to 72 (DPNQQQFNQAGF), 73 to 80 (DQNQQYYQ), 81 to 92 (DPNQQQFNQPGF), 93 to 100 (DPNQQYYQ), 101 to 112 (DPNQQQFNQAGF), 113 to 119 (DQNQYYQ), 120 to 131 (DPNQQQFNQSGF), 132 to 138 (DQNQYYQ), 139 to 150 (DPNQQQFNQPSF), and 151 to 162 (DLNNQQFNQPGF). The span at 38-49 (SGFDPNQQQFNQ) shows a compositional bias: polar residues. Over residues 53-100 (DPNQQYYQDPNQQQFNQAGFDQNQQYYQDPNQQQFNQPGFDPNQQYYQ) the composition is skewed to low complexity. A disordered region spans residues 122-150 (NQQQFNQSGFDQNQYYQDPNQQQFNQPSF).

In Mycoplasma genitalium (strain ATCC 33530 / DSM 19775 / NCTC 10195 / G37) (Mycoplasmoides genitalium), this protein is Proline-rich P65 protein homolog.